An 84-amino-acid chain; its full sequence is ATP synthase subunit c (84 aa).

The next 2 helical transmembrane spans lie at 9–29 and 54–74; these read IFGS…GFSL and IVAG…LLFI.

The protein belongs to the ATPase C chain family. F-type ATPases have 2 components, F(1) - the catalytic core - and F(0) - the membrane proton channel. F(1) has five subunits: alpha(3), beta(3), gamma(1), delta(1), epsilon(1). F(0) has three main subunits: a(1), b(2) and c(10-14). The alpha and beta chains form an alternating ring which encloses part of the gamma chain. F(1) is attached to F(0) by a central stalk formed by the gamma and epsilon chains, while a peripheral stalk is formed by the delta and b chains.

It localises to the cell inner membrane. Functionally, f(1)F(0) ATP synthase produces ATP from ADP in the presence of a proton or sodium gradient. F-type ATPases consist of two structural domains, F(1) containing the extramembraneous catalytic core and F(0) containing the membrane proton channel, linked together by a central stalk and a peripheral stalk. During catalysis, ATP synthesis in the catalytic domain of F(1) is coupled via a rotary mechanism of the central stalk subunits to proton translocation. Key component of the F(0) channel; it plays a direct role in translocation across the membrane. A homomeric c-ring of between 10-14 subunits forms the central stalk rotor element with the F(1) delta and epsilon subunits. This Histophilus somni (strain 2336) (Haemophilus somnus) protein is ATP synthase subunit c.